We begin with the raw amino-acid sequence, 183 residues long: Dual-action ribosomal maturation protein DarP (183 aa).

The interval 1–27 is disordered; that stretch reads MSSHSQEPVGEENFDDSEYDRPSKSQV. Over residues 9 to 18 the composition is skewed to acidic residues; the sequence is VGEENFDDSE.

Belongs to the DarP family.

The protein resides in the cytoplasm. Its function is as follows. Member of a network of 50S ribosomal subunit biogenesis factors which assembles along the 30S-50S interface, preventing incorrect 23S rRNA structures from forming. Promotes peptidyl transferase center (PTC) maturation. This Bordetella parapertussis (strain 12822 / ATCC BAA-587 / NCTC 13253) protein is Dual-action ribosomal maturation protein DarP.